The following is a 239-amino-acid chain: Orotidine 5'-phosphate decarboxylase (239 aa).

Substrate is bound by residues aspartate 10, lysine 33, 60–69 (DLKLYDIPNT), threonine 124, arginine 186, glutamine 195, glycine 215, and arginine 216. Lysine 62 serves as the catalytic Proton donor.

Belongs to the OMP decarboxylase family. Type 1 subfamily. In terms of assembly, homodimer.

It catalyses the reaction orotidine 5'-phosphate + H(+) = UMP + CO2. The protein operates within pyrimidine metabolism; UMP biosynthesis via de novo pathway; UMP from orotate: step 2/2. Its function is as follows. Catalyzes the decarboxylation of orotidine 5'-monophosphate (OMP) to uridine 5'-monophosphate (UMP). The protein is Orotidine 5'-phosphate decarboxylase of Latilactobacillus sakei subsp. sakei (strain 23K) (Lactobacillus sakei subsp. sakei).